We begin with the raw amino-acid sequence, 157 residues long: WPP domain-containing protein 3 (157 aa).

Over residues Met1–Glu20 the composition is skewed to polar residues. The interval Met1–Thr41 is disordered. Positions His32 to Thr41 are enriched in basic and acidic residues. The interval Thr37–Ala138 is WPP; degenerate.

Expressed in roots, stems and leaves.

Its subcellular location is the cytoplasm. The protein resides in the nucleus. Its function is as follows. Regulates the mitotic activity in roots. This chain is WPP domain-containing protein 3 (WPP3), found in Arabidopsis thaliana (Mouse-ear cress).